The primary structure comprises 411 residues: Adenylosuccinate synthetase (411 aa).

GTP contacts are provided by residues 11–17 and 39–41; these read GDEGKGK and GHT. The Proton acceptor role is filled by aspartate 12. Residues aspartate 12 and glycine 39 each coordinate Mg(2+). IMP is bound by residues 12–15, 37–40, threonine 121, arginine 135, glutamine 215, threonine 230, and arginine 294; these read DEGK and NAGH. Residue histidine 40 is the Proton donor of the active site. 290–296 is a binding site for substrate; that stretch reads TTTKRPR. Residues arginine 296, 322-324, and 400-402 contribute to the GTP site; these read KLD and STS.

It belongs to the adenylosuccinate synthetase family. In terms of assembly, homodimer. Mg(2+) is required as a cofactor.

The protein localises to the cytoplasm. It carries out the reaction IMP + L-aspartate + GTP = N(6)-(1,2-dicarboxyethyl)-AMP + GDP + phosphate + 2 H(+). The protein operates within purine metabolism; AMP biosynthesis via de novo pathway; AMP from IMP: step 1/2. Functionally, plays an important role in the de novo pathway of purine nucleotide biosynthesis. Catalyzes the first committed step in the biosynthesis of AMP from IMP. This Helicobacter pylori (strain ATCC 700392 / 26695) (Campylobacter pylori) protein is Adenylosuccinate synthetase.